The sequence spans 207 residues: Imidazoleglycerol-phosphate dehydratase (207 aa).

The protein belongs to the imidazoleglycerol-phosphate dehydratase family.

It localises to the cytoplasm. It carries out the reaction D-erythro-1-(imidazol-4-yl)glycerol 3-phosphate = 3-(imidazol-4-yl)-2-oxopropyl phosphate + H2O. The protein operates within amino-acid biosynthesis; L-histidine biosynthesis; L-histidine from 5-phospho-alpha-D-ribose 1-diphosphate: step 6/9. The polypeptide is Imidazoleglycerol-phosphate dehydratase (Mycobacterium avium (strain 104)).